The primary structure comprises 72 residues: Translation initiation factor IF-1 (72 aa).

The S1-like domain maps to 1–72; that stretch reads MAKEEMLEFP…TKGRINYRFK (72 aa).

Belongs to the IF-1 family. Component of the 30S ribosomal translation pre-initiation complex which assembles on the 30S ribosome in the order IF-2 and IF-3, IF-1 and N-formylmethionyl-tRNA(fMet); mRNA recruitment can occur at any time during PIC assembly.

The protein localises to the cytoplasm. Functionally, one of the essential components for the initiation of protein synthesis. Stabilizes the binding of IF-2 and IF-3 on the 30S subunit to which N-formylmethionyl-tRNA(fMet) subsequently binds. Helps modulate mRNA selection, yielding the 30S pre-initiation complex (PIC). Upon addition of the 50S ribosomal subunit IF-1, IF-2 and IF-3 are released leaving the mature 70S translation initiation complex. The polypeptide is Translation initiation factor IF-1 (Paracoccus denitrificans (strain Pd 1222)).